Reading from the N-terminus, the 1823-residue chain is Vitellogenin (1823 aa).

An N-terminal signal peptide occupies residues 1 to 14 (MWKLLLVALAFALA). Gln-17 carries the pyrrolidone carboxylic acid modification. Residues 18–658 (FQPGKVYRYS…SPSGPLPRAV (641 aa)) enclose the Vitellogenin domain. Residues 953–986 (KGLISQQQQQPHHQQQPHQHGQDQARAAYQRPWA) form a disordered region. Residues 958 to 976 (QQQQQPHHQQQPHQHGQDQ) are compositionally biased toward low complexity. N-linked (GlcNAc...) asparagine glycosylation is present at Asn-1097. Positions 1119 to 1289 (SDKDKDAKKP…SSSSSESKSL (171 aa)) are disordered. 2 stretches are compositionally biased toward low complexity: residues 1128 to 1149 (PPGS…SSSD) and 1178 to 1192 (SSSS…SDSS). Residues 1194–1206 (SPHKHGGAKRQHA) are compositionally biased toward basic residues. 2 stretches are compositionally biased toward low complexity: residues 1217–1238 (SHSS…KSFS) and 1253–1286 (SSSS…SSES). Asn-1298 is a glycosylation site (N-linked (GlcNAc...) asparagine). Residues 1308 to 1351 (VPQRKPQTSRRHTPASSSSSSSSSSSSSSSSSSSDSDMTVSAES) form a disordered region. Low complexity predominate over residues 1323–1344 (SSSSSSSSSSSSSSSSSSSDSD). Residues 1564–1732 (SACELNEQSL…SWIAPDETCG (169 aa)) form the VWFD domain. Cystine bridges form between Cys-1566/Cys-1695 and Cys-1589/Cys-1731. Asn-1675 carries N-linked (GlcNAc...) asparagine glycosylation.

What corresponds to phosvitin in other species is lost during maturation of vitellogenin to lipovitellin. Produced by the liver, secreted into the blood and then sequestered by receptor mediated endocytosis into growing oocytes, where it is generally cleaved, giving rise to the respective yolk components lipovitellins 1 and 2.

In terms of biological role, precursor of the major egg-yolk proteins that are sources of nutrients during early development of oviparous organisms. The chain is Vitellogenin from Ichthyomyzon unicuspis (Silver lamprey).